Here is a 96-residue protein sequence, read N- to C-terminus: Large ribosomal subunit protein uL23 (96 aa).

Belongs to the universal ribosomal protein uL23 family. In terms of assembly, part of the 50S ribosomal subunit. Contacts protein L29, and trigger factor when it is bound to the ribosome.

One of the early assembly proteins it binds 23S rRNA. One of the proteins that surrounds the polypeptide exit tunnel on the outside of the ribosome. Forms the main docking site for trigger factor binding to the ribosome. The sequence is that of Large ribosomal subunit protein uL23 from Solidesulfovibrio magneticus (strain ATCC 700980 / DSM 13731 / RS-1) (Desulfovibrio magneticus).